The following is a 340-amino-acid chain: N(4)-(Beta-N-acetylglucosaminyl)-L-asparaginase (340 aa).

A signal peptide spans 1-45 (MRIIYKQQTMNNNRRDFIKKLGIATAAIAINPLEAKNLLDTSEPK). The active-site Nucleophile is the threonine 197. Substrate is bound by residues 225 to 228 (RVGD) and 248 to 251 (TGHG).

It belongs to the Ntn-hydrolase family. In terms of assembly, heterotetramer of two alpha and two beta chains arranged as a dimer of alpha/beta heterodimers. Cleaved into an alpha and beta chain by autocatalysis; this activates the enzyme. The N-terminal residue of the beta subunit is responsible for the nucleophile hydrolase activity.

It is found in the periplasm. The enzyme catalyses N(4)-(beta-N-acetyl-D-glucosaminyl)-L-asparagine + H2O = N-acetyl-beta-D-glucosaminylamine + L-aspartate + H(+). In terms of biological role, cleaves the GlcNAc-Asn bond which joins oligosaccharides to the peptide of asparagine-linked glycoproteins. Requires that the glycosylated asparagine moiety is not substituted on its N-(R1) and C- (R2) terminus. This is N(4)-(Beta-N-acetylglucosaminyl)-L-asparaginase from Elizabethkingia miricola (Chryseobacterium miricola).